Consider the following 796-residue polypeptide: Kinesin-like protein KIF3C (796 aa).

One can recognise a Kinesin motor domain in the interval 10–367; that stretch reads ALKVVARCRP…LRFANRAKNI (358 aa). 97 to 104 serves as a coordination point for ATP; that stretch reads GQTGTGKT. 3 disordered regions span residues 251 to 292, 397 to 421, and 754 to 796; these read ERQN…PKEA, EKKG…SAPA, and PSTS…VDHD. The segment covering 270–284 has biased composition (gly residues); it reads AGGGGGGGGTSGSGS. Residues 378–632 are a coiled coil; the sequence is KDTLLREFQE…NEQTRELKLK (255 aa). The span at 401–416 shows a compositional bias: basic residues; it reads MLGKRPRRKSSRRKKA. Positions 633 to 793 are globular; that stretch reads YLIIENFIPP…SAPLHPATVV (161 aa).

It belongs to the TRAFAC class myosin-kinesin ATPase superfamily. Kinesin family. Kinesin II subfamily. As to quaternary structure, heterodimer of KIF3A and KIF3C.

It is found in the cytoplasm. The protein resides in the cytoskeleton. In terms of biological role, microtubule-based anterograde translocator for membranous organelles. In Rattus norvegicus (Rat), this protein is Kinesin-like protein KIF3C (Kif3c).